The following is a 146-amino-acid chain: Small ribosomal subunit protein uS13 (146 aa).

The interval 119–146 (ARGKKVRGQRTRSTGRKGRTVGVVRRKR) is disordered.

This sequence belongs to the universal ribosomal protein uS13 family. Part of the 30S ribosomal subunit. Forms a loose heterodimer with protein S19. Forms two bridges to the 50S subunit in the 70S ribosome.

Its function is as follows. Located at the top of the head of the 30S subunit, it contacts several helices of the 16S rRNA. In the 70S ribosome it contacts the 23S rRNA (bridge B1a) and protein L5 of the 50S subunit (bridge B1b), connecting the 2 subunits; these bridges are implicated in subunit movement. This is Small ribosomal subunit protein uS13 from Archaeoglobus fulgidus (strain ATCC 49558 / DSM 4304 / JCM 9628 / NBRC 100126 / VC-16).